A 345-amino-acid chain; its full sequence is Anthranilate phosphoribosyltransferase (345 aa).

Residues Gly83, 86–87 (GD), Thr91, 93–96 (NIST), 111–119 (KHGNRNLSS), and Ser123 contribute to the 5-phospho-alpha-D-ribose 1-diphosphate site. Gly83 is an anthranilate binding site. A Mg(2+)-binding site is contributed by Ser95. Position 114 (Asn114) interacts with anthranilate. Arg169 lines the anthranilate pocket. Mg(2+) is bound by residues Asp228 and Glu229.

Belongs to the anthranilate phosphoribosyltransferase family. As to quaternary structure, homodimer. It depends on Mg(2+) as a cofactor.

It catalyses the reaction N-(5-phospho-beta-D-ribosyl)anthranilate + diphosphate = 5-phospho-alpha-D-ribose 1-diphosphate + anthranilate. Its pathway is amino-acid biosynthesis; L-tryptophan biosynthesis; L-tryptophan from chorismate: step 2/5. Functionally, catalyzes the transfer of the phosphoribosyl group of 5-phosphorylribose-1-pyrophosphate (PRPP) to anthranilate to yield N-(5'-phosphoribosyl)-anthranilate (PRA). The sequence is that of Anthranilate phosphoribosyltransferase from Paracoccus denitrificans (strain Pd 1222).